We begin with the raw amino-acid sequence, 229 residues long: Enolase-phosphatase E1 (229 aa).

It belongs to the HAD-like hydrolase superfamily. MasA/MtnC family. As to quaternary structure, monomer. It depends on Mg(2+) as a cofactor.

The enzyme catalyses 5-methylsulfanyl-2,3-dioxopentyl phosphate + H2O = 1,2-dihydroxy-5-(methylsulfanyl)pent-1-en-3-one + phosphate. It participates in amino-acid biosynthesis; L-methionine biosynthesis via salvage pathway; L-methionine from S-methyl-5-thio-alpha-D-ribose 1-phosphate: step 3/6. The protein operates within amino-acid biosynthesis; L-methionine biosynthesis via salvage pathway; L-methionine from S-methyl-5-thio-alpha-D-ribose 1-phosphate: step 4/6. Functionally, bifunctional enzyme that catalyzes the enolization of 2,3-diketo-5-methylthiopentyl-1-phosphate (DK-MTP-1-P) into the intermediate 2-hydroxy-3-keto-5-methylthiopentenyl-1-phosphate (HK-MTPenyl-1-P), which is then dephosphorylated to form the acireductone 1,2-dihydroxy-3-keto-5-methylthiopentene (DHK-MTPene). This chain is Enolase-phosphatase E1, found in Yersinia pseudotuberculosis serotype O:1b (strain IP 31758).